We begin with the raw amino-acid sequence, 440 residues long: Chromosome partition protein MukF (440 aa).

The interval 208–236 (LSETSGTLRELQDTLEAAGDKLQANLLRI) is leucine-zipper.

It belongs to the MukF family. Interacts, and probably forms a ternary complex, with MukE and MukB via its C-terminal region. The complex formation is stimulated by calcium or magnesium. It is required for an interaction between MukE and MukB.

It is found in the cytoplasm. It localises to the nucleoid. Its function is as follows. Involved in chromosome condensation, segregation and cell cycle progression. May participate in facilitating chromosome segregation by condensation DNA from both sides of a centrally located replisome during cell division. Not required for mini-F plasmid partitioning. Probably acts via its interaction with MukB and MukE. Overexpression results in anucleate cells. It has a calcium binding activity. This Salmonella typhi protein is Chromosome partition protein MukF.